The chain runs to 236 residues: 2-C-methyl-D-erythritol 4-phosphate cytidylyltransferase (236 aa).

Belongs to the IspD/TarI cytidylyltransferase family. IspD subfamily.

The catalysed reaction is 2-C-methyl-D-erythritol 4-phosphate + CTP + H(+) = 4-CDP-2-C-methyl-D-erythritol + diphosphate. It participates in isoprenoid biosynthesis; isopentenyl diphosphate biosynthesis via DXP pathway; isopentenyl diphosphate from 1-deoxy-D-xylulose 5-phosphate: step 2/6. In terms of biological role, catalyzes the formation of 4-diphosphocytidyl-2-C-methyl-D-erythritol from CTP and 2-C-methyl-D-erythritol 4-phosphate (MEP). The chain is 2-C-methyl-D-erythritol 4-phosphate cytidylyltransferase from Burkholderia thailandensis (strain ATCC 700388 / DSM 13276 / CCUG 48851 / CIP 106301 / E264).